Consider the following 100-residue polypeptide: NADH-quinone oxidoreductase subunit K (100 aa).

3 helical membrane passes run 4-24 (LSHG…GMII), 28-48 (LLFM…AFVV), and 60-80 (VMYI…LALL).

It belongs to the complex I subunit 4L family. As to quaternary structure, NDH-1 is composed of 13 different subunits. Subunits NuoA, H, J, K, L, M, N constitute the membrane sector of the complex.

It is found in the cell inner membrane. The catalysed reaction is a quinone + NADH + 5 H(+)(in) = a quinol + NAD(+) + 4 H(+)(out). Its function is as follows. NDH-1 shuttles electrons from NADH, via FMN and iron-sulfur (Fe-S) centers, to quinones in the respiratory chain. The immediate electron acceptor for the enzyme in this species is believed to be ubiquinone. Couples the redox reaction to proton translocation (for every two electrons transferred, four hydrogen ions are translocated across the cytoplasmic membrane), and thus conserves the redox energy in a proton gradient. This Sodalis glossinidius (strain morsitans) protein is NADH-quinone oxidoreductase subunit K.